The following is a 265-amino-acid chain: MLQGFLFLLSVVLLFSSSAAACDRCLHSSKAAYFSSASALSSGACAYGSMATGFFAGHIAAALPSIYKDGSGCGACFQVRCKNPTLCSSKGTTVIVTDLNKTNQTDLVLSSRAFRAMAKPVVGADRDLLKQGIVDIEYRRVPCDYGNKKMNVRVEESSKNPNYLAIKLLYQGGQTEVVAIYIAQVGSSHWSYMTRSHGAVWVTDKVPNGALQFRFVVTAGYDGKMVWSQRVLPANWEAGKSYDAGVQITDIAQEGCDPCDDHIWN.

A signal peptide spans 1-21 (MLQGFLFLLSVVLLFSSSAAA). An Expansin-like EG45 domain is found at 42 to 148 (SGACAYGSMA…RRVPCDYGNK (107 aa)). 2 N-linked (GlcNAc...) asparagine glycosylation sites follow: N100 and N103. An Expansin-like CBD domain is found at 162 to 244 (NYLAIKLLYQ…NWEAGKSYDA (83 aa)).

The protein belongs to the expansin family. Expansin-like A subfamily.

The protein resides in the secreted. In Arabidopsis thaliana (Mouse-ear cress), this protein is Expansin-like A2 (EXLA2).